The sequence spans 94 residues: Large ribosomal subunit protein bL28 (94 aa).

Belongs to the bacterial ribosomal protein bL28 family.

The protein is Large ribosomal subunit protein bL28 of Novosphingobium aromaticivorans (strain ATCC 700278 / DSM 12444 / CCUG 56034 / CIP 105152 / NBRC 16084 / F199).